The chain runs to 317 residues: 2,3,4,5-tetrahydropyridine-2,6-dicarboxylate N-succinyltransferase (317 aa).

Mg(2+)-binding residues include D166 and E183. The active-site Acyl-anhydride intermediate is the E199. Residues R201, G216, S219, A242, 257-258, G265, K277, and 290-293 contribute to the succinyl-CoA site; these read EA and RRNS.

This sequence belongs to the type 2 tetrahydrodipicolinate N-succinyltransferase family. Homotrimer.

The protein resides in the cytoplasm. It catalyses the reaction (S)-2,3,4,5-tetrahydrodipicolinate + succinyl-CoA + H2O = (S)-2-succinylamino-6-oxoheptanedioate + CoA. It participates in amino-acid biosynthesis; L-lysine biosynthesis via DAP pathway; LL-2,6-diaminopimelate from (S)-tetrahydrodipicolinate (succinylase route): step 1/3. In terms of biological role, catalyzes the conversion of the cyclic tetrahydrodipicolinate (THDP) into the acyclic N-succinyl-L-2-amino-6-oxopimelate using succinyl-CoA. The protein is 2,3,4,5-tetrahydropyridine-2,6-dicarboxylate N-succinyltransferase (dapD) of Mycobacterium tuberculosis (strain CDC 1551 / Oshkosh).